Reading from the N-terminus, the 516-residue chain is MSVDEICENTKMGREYALLGNYETSLVYYQGVLQQIQKLLTSVHEPQRKHQWQTIRQELSQEYEHVKNITKTLNGFKSEPAAPEPAPNHRAAPFSHHQHAAKPAAAEPARDPDVWPPPTPVDHRPSPPYQRAARKDPPRRSEPSKPANRAPGNDRGGRGPSDRRGDARSGGGGRGGARGSDKDKNRGGKSDKDKKAPSGEEGDEKKFDPAGYDKDLVENLERDIVQRNPNVHWADIAGLTEAKRLLEEAVVLPLWMPDYFKGIRRPWKGVLMVGPPGTGKTMLAKAVATECGTTFFNVSSASLTSKYHGESEKLVRLLFEMARFYAPSTIFIDEIDSICSKRGTGSEHEASRRVKSELLIQMDGVSGPSAGEESSKMVMVLAATNFPWDIDEALRRRLEKRIYIPLPEIDGREQLLRINLKEVPLADDIDLKSIAEKMDGYSGADITNVCRDASMMAMRRRIQGLRPEEIRHIPKEELNQPSTPADFLLALQKVSKSVGKEDLVKYMAWMEEFGSV.

Residues 75–212 (GFKSEPAAPE…DEKKFDPAGY (138 aa)) are disordered. Composition is skewed to basic and acidic residues over residues 133-143 (ARKDPPRRSEP) and 155-167 (RGGR…RGDA). The span at 168–178 (RSGGGGRGGAR) shows a compositional bias: gly residues. The segment covering 179-212 (GSDKDKNRGGKSDKDKKAPSGEEGDEKKFDPAGY) has biased composition (basic and acidic residues). 274–281 (GPPGTGKT) serves as a coordination point for ATP.

It belongs to the AAA ATPase family. Katanin p60 subunit A1 subfamily. In terms of assembly, can homooligomerize into hexameric rings, which may be promoted by interaction with microtubules. Interacts with KATNB1, which may serve as a targeting subunit.

Its subcellular location is the cytoplasm. The protein resides in the cytoskeleton. The protein localises to the microtubule organizing center. It localises to the centrosome. It is found in the spindle pole. The enzyme catalyses n ATP + n H2O + a microtubule = n ADP + n phosphate + (n+1) alpha/beta tubulin heterodimers.. ATPase activity is stimulated by microtubules, which promote homooligomerization. ATP-dependent microtubule severing is stimulated by interaction with KATNB1. Functionally, catalytic subunit of a complex which severs microtubules in an ATP-dependent manner. Microtubule severing may promote rapid reorganization of cellular microtubule arrays and the release of microtubules from the centrosome following nucleation. In mitotic spindles this could allow depolymerization of the microtubule end proximal to the centrosome, and subsequent poleward microtubule flux. This chain is Katanin p60 ATPase-containing subunit A1, found in Strongylocentrotus purpuratus (Purple sea urchin).